The primary structure comprises 412 residues: Putative competence-damage inducible protein (412 aa).

This sequence belongs to the CinA family.

The chain is Putative competence-damage inducible protein from Bacillus cereus (strain AH820).